The primary structure comprises 681 residues: Chaperone protein htpG (681 aa).

The tract at residues 1-326 (MQKGNIGVTT…SPDIPLNVSR (326 aa)) is a; substrate-binding. The interval 327-545 (SYLQSDSNVK…YMRRMKEMAN (219 aa)) is b. Residues 546-681 (IQAGMSFYGE…NFVKRSIELI (136 aa)) form a c region. Residues 601–620 (DALKKKQEGKKDEDIPTAEK) form a disordered region.

This sequence belongs to the heat shock protein 90 family. Homodimer.

It is found in the cytoplasm. Molecular chaperone. Has ATPase activity. The chain is Chaperone protein htpG from Bacteroides fragilis (strain 638R).